Here is a 292-residue protein sequence, read N- to C-terminus: Acetylglutamate kinase (292 aa).

Residues 64 to 65 (GG), arginine 86, and asparagine 190 each bind substrate.

It belongs to the acetylglutamate kinase family. ArgB subfamily.

It is found in the cytoplasm. It carries out the reaction N-acetyl-L-glutamate + ATP = N-acetyl-L-glutamyl 5-phosphate + ADP. The protein operates within amino-acid biosynthesis; L-arginine biosynthesis; N(2)-acetyl-L-ornithine from L-glutamate: step 2/4. Catalyzes the ATP-dependent phosphorylation of N-acetyl-L-glutamate. This is Acetylglutamate kinase from Trichlorobacter lovleyi (strain ATCC BAA-1151 / DSM 17278 / SZ) (Geobacter lovleyi).